Reading from the N-terminus, the 573-residue chain is Putative 15-O-acetyltransferase SAT12 (573 aa).

Residues 1–40 (MLDDDCSPTSSSEMSNASSREASITSRSSSTSGNNSLPED) form a disordered region. Over residues 7-36 (SPTSSSEMSNASSREASITSRSSSTSGNNS) the composition is skewed to low complexity.

It belongs to the trichothecene O-acetyltransferase family.

Its pathway is mycotoxin biosynthesis. Its function is as follows. Putative 15-O-acetyltransferase; part of the satratoxin SC2 cluster involved in the biosynthesis of satratoxins, trichothecene mycotoxins that are associated with human food poisonings. Satratoxins are suggested to be made by products of multiple gene clusters (SC1, SC2 and SC3) that encode 21 proteins in all, including polyketide synthases, acetyltransferases, and other enzymes expected to modify the trichothecene skeleton. SC1 encodes 10 proteins, SAT1 to SAT10. The largest are SAT8, which encodes a putative polyketide synthase (PKS) with a conventional non-reducing architecture, and SAT10, a putative protein containing four ankyrin repeats and thus may be involved in protein scaffolding. The putative short-chain reductase SAT3 may assist the PKS in some capacity. SAT6 contains a secretory lipase domain and acts probably as a trichothecene esterase. SAT5 encodes a putative acetyltransferase, and so, with SAT6, may affect endogenous protection from toxicity. The probable transcription factor SAT9 may regulate the expression of the SC1 cluster. SC2 encodes proteins SAT11 to SAT16, the largest of which encodes the putative reducing PKS SAT13. SAT11 is a cytochrome P450 monooxygenase, while SAT14 and SAT16 are probable acetyltransferases. The SC2 cluster may be regulated by the transcription factor SAT15. SC3 is a small cluster that encodes 5 proteins, SAT17 to SAT21. SAT21 is a putative MFS-type transporter which may have a role in exporting secondary metabolites. The four other proteins putatively encoded in SC3 include the taurine hydroxylase-like protein SAT17, the O-methyltransferase SAT18, the acetyltransferase SAT19, and the Cys6-type zinc finger SAT20, the latter being probably involved in regulation of SC3 expression. The protein is Putative 15-O-acetyltransferase SAT12 of Stachybotrys chartarum (strain CBS 109288 / IBT 7711) (Toxic black mold).